A 379-amino-acid chain; its full sequence is Homoserine O-succinyltransferase (379 aa).

The 310-residue stretch at 51–360 (NAVLICHALS…DSPYGHDAFL (310 aa)) folds into the AB hydrolase-1 domain. Ser157 (nucleophile) is an active-site residue. Arg227 is a binding site for substrate. Active-site residues include Asp323 and His356. Asp357 is a binding site for substrate.

The protein belongs to the AB hydrolase superfamily. MetX family. Homodimer.

The protein resides in the cytoplasm. It catalyses the reaction L-homoserine + succinyl-CoA = O-succinyl-L-homoserine + CoA. It functions in the pathway amino-acid biosynthesis; L-methionine biosynthesis via de novo pathway; O-succinyl-L-homoserine from L-homoserine: step 1/1. Functionally, transfers a succinyl group from succinyl-CoA to L-homoserine, forming succinyl-L-homoserine. In Pseudomonas putida (strain GB-1), this protein is Homoserine O-succinyltransferase.